A 169-amino-acid chain; its full sequence is UPF0303 protein BruAb1_1406 (169 aa).

It belongs to the UPF0303 family.

This chain is UPF0303 protein BruAb1_1406, found in Brucella abortus biovar 1 (strain 9-941).